A 197-amino-acid polypeptide reads, in one-letter code: MSLSIDVTSLPSISSSIFKNESSSTTSTLSGKSIGRSEQYISPDAEAFNKYMLSKSLEDIGPSDSASNDPLTSFSIRSNAVKTNADAGVSMDSSTQSRPSSNVGCDQLDFSLTKGVNVSANLDSCISISTDHKKEKSKKDKSRKHYPRIEADSDSEDYVLDDSDSDDGKCKNCKYKKKYFALRMRMKRVAMQLIEDL.

Positions 17–30 (IFKNESSSTTSTLS) are enriched in low complexity. Residues 17-36 (IFKNESSSTTSTLSGKSIGR) form a disordered region. Phosphoserine; by host CK1 is present on Ser67. Asp92 contributes to the Mg(2+) binding site. The interval 131 to 167 (DHKKEKSKKDKSRKHYPRIEADSDSEDYVLDDSDSDD) is disordered. Over residues 152–165 (DSDSEDYVLDDSDS) the composition is skewed to acidic residues. 4 positions are modified to phosphoserine; by host: Ser153, Ser155, Ser163, and Ser165.

This sequence belongs to the rotavirus NSP5 family. Homodimer. Interacts with VP1. Interacts with VP2. Interacts with NSP2; this interaction leads to up-regulation of NSP5 hyperphosphorylation and formation of virus factories. Interacts with NSP6. Participates in the selective exclusion of host proteins from stress granules (SG) and P bodies (PB). Also participates in the sequestration of these remodeled organelles in viral factories. Mg(2+) serves as cofactor. O-glycosylated. In terms of processing, hyperphosphorylated on serine residues, when in dimeric form. Phosphorylation by host CK1 is required for the hyperphosphorylation of NSP5 dimer.

Its subcellular location is the host cytoplasm. Plays an essential role in the viral genome replication. Participates, together with NSP2, in the formation of viral factories (viroplasms), which are large inclusions in the host cytoplasm where replication intermediates are assembled and viral RNA replication takes place. Orchestrates the recruitment of viroplasmic proteins such as capsid proteins to these factories. Participates in the selective exclusion of host proteins from stress granules (SG) and P bodies (PB). Also participates in the sequestration of these remodeled organelles in viral factories. The sequence is that of Non-structural protein 5 from Homo sapiens (Human).